Here is a 363-residue protein sequence, read N- to C-terminus: Pyrimidine monooxygenase RutA (363 aa).

FMN-binding positions include 49–50 (IK), N115, E124, 140–141 (RY), and S190.

It belongs to the NtaA/SnaA/DszA monooxygenase family. RutA subfamily.

It catalyses the reaction uracil + FMNH2 + NADH + O2 = (Z)-3-ureidoacrylate + FMN + NAD(+) + H2O + H(+). The enzyme catalyses thymine + FMNH2 + NADH + O2 = (Z)-2-methylureidoacrylate + FMN + NAD(+) + H2O + H(+). Functionally, catalyzes the pyrimidine ring opening between N-3 and C-4 by an unusual flavin hydroperoxide-catalyzed mechanism, adding oxygen atoms in the process to yield ureidoacrylate peracid, that immediately reacts with FMN forming ureidoacrylate and FMN-N(5)-oxide. The FMN-N(5)-oxide reacts spontaneously with NADH to produce FMN. Requires the flavin reductase RutF to regenerate FMN in vivo. The sequence is that of Pyrimidine monooxygenase RutA from Escherichia coli O157:H7 (strain EC4115 / EHEC).